The primary structure comprises 119 residues: Large ribosomal subunit protein uL14c (119 aa).

The protein belongs to the universal ribosomal protein uL14 family. In terms of assembly, part of the 50S ribosomal subunit.

Its subcellular location is the plastid. The protein resides in the chloroplast. Functionally, binds to 23S rRNA. This chain is Large ribosomal subunit protein uL14c, found in Ostreococcus tauri.